A 199-amino-acid polypeptide reads, in one-letter code: NAD(P)H dehydrogenase (quinone) (199 aa).

The 187-residue stretch at 4-190 folds into the Flavodoxin-like domain; it reads VLVLYYSAYG…AGARYQGRRV (187 aa). Residues 10–15 and 78–80 contribute to the FMN site; these read SAYGHI and TRF. Tyrosine 12 contributes to the NAD(+) binding site. Tryptophan 98 serves as a coordination point for substrate. FMN contacts are provided by residues 113-119 and histidine 134; that span reads STATQHG.

The protein belongs to the WrbA family. Requires FMN as cofactor.

The catalysed reaction is a quinone + NADH + H(+) = a quinol + NAD(+). The enzyme catalyses a quinone + NADPH + H(+) = a quinol + NADP(+). In Methylocella silvestris (strain DSM 15510 / CIP 108128 / LMG 27833 / NCIMB 13906 / BL2), this protein is NAD(P)H dehydrogenase (quinone).